The chain runs to 409 residues: Arginine deiminase (409 aa).

The active-site Amidino-cysteine intermediate is C399.

It belongs to the arginine deiminase family.

The protein resides in the cytoplasm. The catalysed reaction is L-arginine + H2O = L-citrulline + NH4(+). The protein operates within amino-acid degradation; L-arginine degradation via ADI pathway; carbamoyl phosphate from L-arginine: step 1/2. In Latilactobacillus sakei (Lactobacillus sakei), this protein is Arginine deiminase (arcA).